A 331-amino-acid chain; its full sequence is Light-harvesting complex I LH35 proteins (331 aa).

Its subcellular location is the plastid. It localises to the chloroplast. The chain is Light-harvesting complex I LH35 proteins from Euglena gracilis.